A 201-amino-acid polypeptide reads, in one-letter code: NADH-quinone oxidoreductase subunit C (201 aa).

It belongs to the complex I 30 kDa subunit family. As to quaternary structure, NDH-1 is composed of 14 different subunits. Subunits NuoB, C, D, E, F, and G constitute the peripheral sector of the complex.

Its subcellular location is the cell inner membrane. The enzyme catalyses a quinone + NADH + 5 H(+)(in) = a quinol + NAD(+) + 4 H(+)(out). Functionally, NDH-1 shuttles electrons from NADH, via FMN and iron-sulfur (Fe-S) centers, to quinones in the respiratory chain. The immediate electron acceptor for the enzyme in this species is believed to be ubiquinone. Couples the redox reaction to proton translocation (for every two electrons transferred, four hydrogen ions are translocated across the cytoplasmic membrane), and thus conserves the redox energy in a proton gradient. The protein is NADH-quinone oxidoreductase subunit C of Ruegeria sp. (strain TM1040) (Silicibacter sp.).